Consider the following 569-residue polypeptide: uncharacterized protein (569 aa).

The N-terminal stretch at 1-22 (MSLLVKAALILKCASMLQGVSA) is a signal peptide. Residues 498–541 (RETSILDSTNTTSTNATNTTTTTSSSSTASSSASASSSTSATSG) form a disordered region. Low complexity predominate over residues 505–540 (STNTTSTNATNTTTTTSSSSTASSSASASSSTSATS).

It is found in the secreted. The protein localises to the cell surface. This is an uncharacterized protein from Schizosaccharomyces pombe (strain 972 / ATCC 24843) (Fission yeast).